A 354-amino-acid chain; its full sequence is 4-hydroxy-3-methylbut-2-en-1-yl diphosphate synthase (flavodoxin) (354 aa).

C262, C265, C297, and E304 together coordinate [4Fe-4S] cluster.

The protein belongs to the IspG family. The cofactor is [4Fe-4S] cluster.

It catalyses the reaction (2E)-4-hydroxy-3-methylbut-2-enyl diphosphate + oxidized [flavodoxin] + H2O + 2 H(+) = 2-C-methyl-D-erythritol 2,4-cyclic diphosphate + reduced [flavodoxin]. It participates in isoprenoid biosynthesis; isopentenyl diphosphate biosynthesis via DXP pathway; isopentenyl diphosphate from 1-deoxy-D-xylulose 5-phosphate: step 5/6. Its function is as follows. Converts 2C-methyl-D-erythritol 2,4-cyclodiphosphate (ME-2,4cPP) into 1-hydroxy-2-methyl-2-(E)-butenyl 4-diphosphate. The protein is 4-hydroxy-3-methylbut-2-en-1-yl diphosphate synthase (flavodoxin) of Helicobacter hepaticus (strain ATCC 51449 / 3B1).